A 502-amino-acid chain; its full sequence is Protein krueppel (502 aa).

Disordered stretches follow at residues Pro115–Val164 and Asp178–Gly202. 2 stretches are compositionally biased toward low complexity: residues Thr119–Leu136 and Ser183–Ser198. 5 consecutive C2H2-type zinc fingers follow at residues Phe222–His244, Phe250–His272, Tyr278–His300, Tyr306–His328, and Phe334–Cys354. Disordered stretches follow at residues Asn399–Gly427 and Arg445–His502. Acidic residues predominate over residues Glu410 to Glu419. 3 positions are modified to phosphoserine: Ser468, Ser471, and Ser477. A compositionally biased stretch (acidic residues) spans Asp482–Asp491.

The protein belongs to the krueppel C2H2-type zinc-finger protein family.

It is found in the nucleus. Krueppel is a gap class segmentation protein. It is involved in the segmentation of the embryo and in the differentiation of the Malpighian tubules. This Drosophila melanogaster (Fruit fly) protein is Protein krueppel (Kr).